A 187-amino-acid polypeptide reads, in one-letter code: MLLENGWLVDARHVPSPHHDCRPEDEKPTLLVVHNISLPPGEFGGPWIDALFTGTIDPDAHPFFAEIAHLALSADCLIRRDGEVVQYVPFDKRAWHAGVSMYQGRERCNDFSIGIELEGTDTTPYTDAQYEKLVAVTQTLIGRYPAIADNITGHSDIAPERKTDPGPAFDWSRFHAMLTTSSDKEIT.

One can recognise an N-acetylmuramoyl-L-alanine amidase domain in the interval Thr29–Pro167. His34 lines the Zn(2+) pocket. Glu116 (proton acceptor) is an active-site residue. Positions 154 and 164 each coordinate Zn(2+).

The protein belongs to the N-acetylmuramoyl-L-alanine amidase 2 family. It depends on Zn(2+) as a cofactor.

Its subcellular location is the cytoplasm. The catalysed reaction is Hydrolyzes the link between N-acetylmuramoyl residues and L-amino acid residues in certain cell-wall glycopeptides.. Involved in cell wall peptidoglycan recycling. Specifically cleaves the amide bond between the lactyl group of N-acetylmuramic acid and the alpha-amino group of the L-alanine in degradation products containing an anhydro N-acetylmuramyl moiety. The sequence is that of 1,6-anhydro-N-acetylmuramyl-L-alanine amidase AmpD from Enterobacter cloacae.